The chain runs to 352 residues: C-C chemokine receptor type 5 (352 aa).

The Extracellular segment spans residues 1 to 30 (MDYQVSSPTYDIDYYTSEPCQKVNVKQIAA). Y3 is subject to Sulfotyrosine. O-linked (GalNAc...) serine glycans are attached at residues S6 and S7. 3 positions are modified to sulfotyrosine: Y10, Y14, and Y15. Cystine bridges form between C20-C269 and C101-C178. Residues 31-58 (RLLPPLYSLVFIFGFVGNILVVLILINC) form a helical membrane-spanning segment. Over 59–68 (KRLKSMTDIY) the chain is Cytoplasmic. A helical membrane pass occupies residues 69 to 89 (LLNLAISDLFFLLTVPFWAHY). Topologically, residues 90–102 (AAAQWDFGNTMCQ) are extracellular. Residues 103–124 (LLTGLYFIGFFSGIFFIILLTI) form a helical membrane-spanning segment. At 125 to 141 (DRYLAIVHAVFALKART) the chain is on the cytoplasmic side. The helical transmembrane segment at 142–166 (VTFGVVTSVITWVVAVFASLPGIIF) threads the bilayer. Over 167-198 (TRSQREGLHYTCSSHFPYSQYQFWKNFQTLKI) the chain is Extracellular. Residues 199 to 218 (VILGLVLPLLVMVICYSGIL) form a helical membrane-spanning segment. Residues 219 to 235 (KTLLRCRNEKKRHRAVR) lie on the Cytoplasmic side of the membrane. The helical transmembrane segment at 236 to 260 (LIFTIMIVYFLFWAPYNIVLLLNTF) threads the bilayer. The Extracellular portion of the chain corresponds to 261–277 (QEFFGLNNCSSSNRLDQ). A helical membrane pass occupies residues 278–301 (AMQVTETLGMTHCCINPIIYAFVG). At 302-352 (EKFRNYLLVFFQKHIAKRFCKCCRIFQQEAPERASSVYTRSTGEQEISVGL) the chain is on the cytoplasmic side. S-palmitoyl cysteine attachment occurs at residues C321, C323, and C324. Phosphoserine; by BARK1 occurs at positions 336, 337, 342, and 349.

The protein belongs to the G-protein coupled receptor 1 family. As to quaternary structure, interacts with PRAF2. Efficient ligand binding to CCL3/MIP-1alpha and CCL4/MIP-1beta requires sulfation, O-glycosylation and sialic acid modifications. Glycosylation on Ser-6 is required for efficient binding of CCL4. Interacts with GRK2. Interacts with ARRB1 and ARRB2. Interacts with CNIH4. Interacts with S100A4; this interaction stimulates T-lymphocyte chemotaxis. Sulfated on at least 2 of the N-terminal tyrosines. Sulfation is required for efficient binding of the chemokines, CCL3 and CCL4. In terms of processing, palmitoylation in the C-terminal is important for cell surface expression. Post-translationally, phosphorylation on serine residues in the C-terminal is stimulated by binding CC chemokines especially by APO-RANTES. O-glycosylated, but not N-glycosylated. Ser-6 appears to be the major site even if Ser-7 may be also O-glycosylated. Also sialylated glycans present which contribute to chemokine binding. Thr-16 and Ser-17 may also be glycosylated and, if so, with small moieties such as a T-antigen.

Its subcellular location is the cell membrane. Receptor for a number of inflammatory CC-chemokines including CCL3/MIP-1-alpha, CCL4/MIP-1-beta and RANTES and subsequently transduces a signal by increasing the intracellular calcium ion level. May play a role in the control of granulocytic lineage proliferation or differentiation. Participates in T-lymphocyte migration to the infection site by acting as a chemotactic receptor. The chain is C-C chemokine receptor type 5 (CCR5) from Colobus polykomos (Western black-and-white colobus monkey).